Here is a 364-residue protein sequence, read N- to C-terminus: Putative agmatine deiminase (364 aa).

Cys-355 acts as the Amidino-cysteine intermediate in catalysis.

It belongs to the agmatine deiminase family.

The catalysed reaction is agmatine + H2O = N-carbamoylputrescine + NH4(+). In Mycoplasma mycoides subsp. mycoides SC (strain CCUG 32753 / NCTC 10114 / PG1), this protein is Putative agmatine deiminase.